Here is a 146-residue protein sequence, read N- to C-terminus: MGKSSFLQDFKAFAMRGNVIDMAVGVIIGGAFGKIVSSIVADVIMPPIGLLVGGVNFTDLKLQLKPAEVVDGVEKAAVTLNYGNFLQATFDFIIIAFSIFLFIRLLAKLNRKKEEVPAPAAPPAPSKEEVLLTEIRDLLKEQAGKK.

2 helical membrane passes run 12-32 (AFAMRGNVIDMAVGVIIGGAF) and 83-103 (GNFLQATFDFIIIAFSIFLFI).

The protein belongs to the MscL family. In terms of assembly, homopentamer.

The protein resides in the cell inner membrane. Channel that opens in response to stretch forces in the membrane lipid bilayer. May participate in the regulation of osmotic pressure changes within the cell. This chain is Large-conductance mechanosensitive channel, found in Phocaeicola vulgatus (strain ATCC 8482 / DSM 1447 / JCM 5826 / CCUG 4940 / NBRC 14291 / NCTC 11154) (Bacteroides vulgatus).